The primary structure comprises 304 residues: Oxygen-dependent coproporphyrinogen-III oxidase (304 aa).

Ser94 serves as a coordination point for substrate. 2 residues coordinate a divalent metal cation: His98 and His108. His108 (proton donor) is an active-site residue. 110–112 provides a ligand contact to substrate; the sequence is NVR. A divalent metal cation is bound by residues His147 and His177. Residues 242-277 are important for dimerization; the sequence is YVEFNLVWDRGTLFGLQSGGRTESVLMSMPPLARWQ. Position 260-262 (260-262) interacts with substrate; sequence GGR.

Belongs to the aerobic coproporphyrinogen-III oxidase family. Homodimer. Requires a divalent metal cation as cofactor.

The protein localises to the cytoplasm. The catalysed reaction is coproporphyrinogen III + O2 + 2 H(+) = protoporphyrinogen IX + 2 CO2 + 2 H2O. It functions in the pathway porphyrin-containing compound metabolism; protoporphyrin-IX biosynthesis; protoporphyrinogen-IX from coproporphyrinogen-III (O2 route): step 1/1. Its function is as follows. Involved in the heme biosynthesis. Catalyzes the aerobic oxidative decarboxylation of propionate groups of rings A and B of coproporphyrinogen-III to yield the vinyl groups in protoporphyrinogen-IX. This Sodalis glossinidius (strain morsitans) protein is Oxygen-dependent coproporphyrinogen-III oxidase.